We begin with the raw amino-acid sequence, 95 residues long: MEHGDRHITVVDENGNEQLCEILFTFESEDFGKSYVFYYPVGAEFEDEEETEIHVSAFIPGEGEQEGELLPIESEEEWEMIEEVWNTFCAEQDEE.

Belongs to the UPF0473 family.

In Geobacillus sp. (strain WCH70), this protein is UPF0473 protein GWCH70_2487.